The following is a 525-amino-acid chain: GMP synthase [glutamine-hydrolyzing] (525 aa).

A Glutamine amidotransferase type-1 domain is found at 9 to 207; sequence RILILDFGSQ…VRDICECEAL (199 aa). Catalysis depends on C86, which acts as the Nucleophile. Catalysis depends on residues H181 and E183. Residues 208–400 form the GMPS ATP-PPase domain; the sequence is WTPAKIIDDA…LGLPYDMLYR (193 aa). 235–241 is a binding site for ATP; that stretch reads SGGVDSS.

In terms of assembly, homodimer.

The enzyme catalyses XMP + L-glutamine + ATP + H2O = GMP + L-glutamate + AMP + diphosphate + 2 H(+). The protein operates within purine metabolism; GMP biosynthesis; GMP from XMP (L-Gln route): step 1/1. In terms of biological role, catalyzes the synthesis of GMP from XMP. In Cronobacter sakazakii (strain ATCC BAA-894) (Enterobacter sakazakii), this protein is GMP synthase [glutamine-hydrolyzing].